The primary structure comprises 220 residues: Peptide methionine sulfoxide reductase MsrA (220 aa).

The active site involves C54.

The protein belongs to the MsrA Met sulfoxide reductase family.

It carries out the reaction L-methionyl-[protein] + [thioredoxin]-disulfide + H2O = L-methionyl-(S)-S-oxide-[protein] + [thioredoxin]-dithiol. The catalysed reaction is [thioredoxin]-disulfide + L-methionine + H2O = L-methionine (S)-S-oxide + [thioredoxin]-dithiol. In terms of biological role, has an important function as a repair enzyme for proteins that have been inactivated by oxidation. Catalyzes the reversible oxidation-reduction of methionine sulfoxide in proteins to methionine. The sequence is that of Peptide methionine sulfoxide reductase MsrA from Salinispora tropica (strain ATCC BAA-916 / DSM 44818 / JCM 13857 / NBRC 105044 / CNB-440).